Here is a 417-residue protein sequence, read N- to C-terminus: Probable phosphoglycerate kinase (417 aa).

(2R)-3-phosphoglycerate contacts are provided by V23, D24, F25, N26, Q38, R39, S62, H63, G65, R66, L121, R122, H169, and R170. G213 serves as a coordination point for ADP. Position 213 (G213) interacts with CDP. AMP-binding residues include A214 and K215. Position 214 (A214) interacts with ATP. Position 214 (A214) interacts with Mg(2+). Mg(2+)-binding residues include A217 and D218. D218 contacts CDP. Residue K219 participates in AMP binding. Residue K219 participates in ATP binding. Position 237 (G237) interacts with ADP. G237 is a CDP binding site. The AMP site is built by G238 and G312. Residues G238 and G312 each coordinate ATP. Positions 337, 339, and 342 each coordinate CDP. F342 contributes to the ADP binding site. Position 343 (E343) interacts with AMP. ATP-binding residues include E343, D374, and T375. Residue D374 participates in Mg(2+) binding.

This sequence belongs to the phosphoglycerate kinase family. As to quaternary structure, monomer. It depends on Mg(2+) as a cofactor.

The protein resides in the cytoplasm. It catalyses the reaction (2R)-3-phosphoglycerate + ATP = (2R)-3-phospho-glyceroyl phosphate + ADP. It functions in the pathway carbohydrate degradation; glycolysis; pyruvate from D-glyceraldehyde 3-phosphate: step 2/5. This is Probable phosphoglycerate kinase (pgk-1) from Caenorhabditis elegans.